Here is a 262-residue protein sequence, read N- to C-terminus: Catechol O-methyltransferase domain-containing protein 1 (262 aa).

The chain crosses the membrane as a helical; Signal-anchor for type II membrane protein span at residues 12 to 32; it reads AALALGSAALGAAFATGLFLG. Residues aspartate 108, 110–111, serine 116, glutamate 134, valine 135, alanine 163, aspartate 185, aspartate 187, and tyrosine 194 each bind S-adenosyl-L-methionine; that span reads GT.

It belongs to the class I-like SAM-binding methyltransferase superfamily. Cation-dependent O-methyltransferase family. In terms of assembly, homodimer.

The protein resides in the membrane. Putative O-methyltransferase. The sequence is that of Catechol O-methyltransferase domain-containing protein 1 (COMTD1) from Homo sapiens (Human).